The sequence spans 283 residues: Probable replication-associated protein repA1 (283 aa).

It belongs to the IncFII RepA family.

Functionally, this protein is essential for plasmid replication; it is involved in copy control functions. The protein is Probable replication-associated protein repA1 (repA1) of Buchnera aphidicola subsp. Acyrthosiphon pisum (strain APS) (Acyrthosiphon pisum symbiotic bacterium).